The chain runs to 315 residues: Olfactory receptor 3A2 (315 aa).

Over 1 to 29 (MEPEAGTNRTAVAEFILLGLVQTEEMQPV) the chain is Extracellular. Asparagine 8 carries N-linked (GlcNAc...) asparagine glycosylation. Residues 30-52 (VFVLFLFAYLVTIGGNLSILAAI) form a helical membrane-spanning segment. Topologically, residues 53–60 (LVEPKLHA) are cytoplasmic. Residues 61 to 82 (PMYFFLGNLSVLDVGCITVTVP) form a helical membrane-spanning segment. Residues 83–103 (AMLGRLLSHKSTISYDACLSQ) lie on the Extracellular side of the membrane. A disulfide bond links cysteine 100 and cysteine 192. A helical transmembrane segment spans residues 104–123 (LFFFHLLAGMDCFLLTAMAY). Residues 124–143 (DRFLAICWPLTYSTRMSQTV) lie on the Cytoplasmic side of the membrane. A helical transmembrane segment spans residues 144 to 161 (QRMLVAASWACAFTNALT). Residues 162–199 (HTVAMSTLNFCGPNEVNHFYCDLPQLFQLSCSSTQLNE) are Extracellular-facing. A helical transmembrane segment spans residues 200–223 (LLLFAVGFIMAGTPLVLIITSYSH). Over 224–240 (VAAAVLRIRSVEGWKKA) the chain is Cytoplasmic. Residues 241 to 264 (FSTCGSHLTVVCLFFGTGIFNYMR) traverse the membrane as a helical segment. Topologically, residues 265–275 (LGSEEASDKDK) are extracellular. A helical transmembrane segment spans residues 276–295 (GVGVFNTVINPMLNPLIYSL). At 296–315 (RNPDVQGALWRIFLGRRSLT) the chain is on the cytoplasmic side.

This sequence belongs to the G-protein coupled receptor 1 family.

It is found in the cell membrane. Odorant receptor. This Pan troglodytes (Chimpanzee) protein is Olfactory receptor 3A2 (OR3A2).